An 834-amino-acid chain; its full sequence is Probable glucan 1,3-beta-glucosidase D (834 aa).

Residues 1–33 (MPSHSRSRDRYGGRDSDREARYDYDYARRRYAT) show a composition bias toward basic and acidic residues. Disordered stretches follow at residues 1 to 188 (MPSH…ASHL) and 200 to 251 (QYEK…TKAR). Over 1–306 (MPSHSRSRDR…GGRPFWKRKK (306 aa)) the chain is Cytoplasmic. Residues 34–45 (DDNDDDYDDDEL) show a composition bias toward acidic residues. Basic and acidic residues-rich tracts occupy residues 46–76 (EHGL…RDAE), 98–173 (YGHD…ETAA), 201–218 (YEKE…AAKA), and 228–245 (VVGE…ESHR). A helical; Signal-anchor for type II membrane protein membrane pass occupies residues 307 to 327 (WIGLGALILILVIVIPVAVVV). Over 328–834 (SKKHDNKSDP…PDFGNLPEYY (507 aa)) the chain is Extracellular. The tract at residues 331–354 (HDNKSDPADPQGTSPGKSNLDGLS) is disordered. N-linked (GlcNAc...) asparagine glycosylation is found at asparagine 333, asparagine 379, asparagine 384, asparagine 396, asparagine 549, asparagine 561, and asparagine 570. Glutamate 600 functions as the Proton donor in the catalytic mechanism. Residues asparagine 639, asparagine 672, and asparagine 692 are each glycosylated (N-linked (GlcNAc...) asparagine). Glutamate 705 functions as the Nucleophile in the catalytic mechanism.

The protein belongs to the glycosyl hydrolase 5 (cellulase A) family.

The protein resides in the cell membrane. The enzyme catalyses Successive hydrolysis of beta-D-glucose units from the non-reducing ends of (1-&gt;3)-beta-D-glucans, releasing alpha-glucose.. Functionally, glucosidase involved in the degradation of cellulosic biomass. Active on lichenan. This is Probable glucan 1,3-beta-glucosidase D (exgD) from Neosartorya fischeri (strain ATCC 1020 / DSM 3700 / CBS 544.65 / FGSC A1164 / JCM 1740 / NRRL 181 / WB 181) (Aspergillus fischerianus).